The sequence spans 320 residues: Cytochrome f (320 aa).

Residues 1–35 form the signal peptide; that stretch reads MQMRNTFSWIKEEIIRFIAVSLIIYIITRAPISNA. Residues tyrosine 36, cysteine 56, cysteine 59, and histidine 60 each coordinate heme. The chain crosses the membrane as a helical span at residues 286–306; it reads VQGLLLFLASIILAQIFLVLK.

Belongs to the cytochrome f family. As to quaternary structure, the 4 large subunits of the cytochrome b6-f complex are cytochrome b6, subunit IV (17 kDa polypeptide, petD), cytochrome f and the Rieske protein, while the 4 small subunits are PetG, PetL, PetM and PetN. The complex functions as a dimer. Heme is required as a cofactor.

The protein localises to the plastid. It localises to the chloroplast thylakoid membrane. Functionally, component of the cytochrome b6-f complex, which mediates electron transfer between photosystem II (PSII) and photosystem I (PSI), cyclic electron flow around PSI, and state transitions. In Morus indica (Mulberry), this protein is Cytochrome f.